A 143-amino-acid polypeptide reads, in one-letter code: Transcriptional regulator MraZ (143 aa).

SpoVT-AbrB domains lie at threonine 5–glutamate 47 and threonine 76–alanine 119.

This sequence belongs to the MraZ family. In terms of assembly, forms oligomers.

Its subcellular location is the cytoplasm. The protein localises to the nucleoid. The sequence is that of Transcriptional regulator MraZ from Mycolicibacterium smegmatis (strain ATCC 700084 / mc(2)155) (Mycobacterium smegmatis).